The chain runs to 515 residues: Thioredoxin domain-containing protein 2 (515 aa).

The tract at residues 1 to 23 (MTLNNGGKANERGSNENPLQALS) is disordered. Ser14 and Ser39 each carry phosphoserine. Positions 51 to 390 (TLHMSTEESE…NTIKSSEEDV (340 aa)) are disordered. 2 stretches are compositionally biased toward polar residues: residues 61-75 (FPQQ…SENT) and 85-136 (KPSS…TNST). 21 consecutive repeat copies span residues 92–106 (QLKQ…GYSK), 107–121 (QTNY…AKTT), 122–136 (HPKQ…TNST), 137–151 (HYRE…EDII), 152–166 (QPKK…EDII), 167–181 (QSKK…EDII), 182–196 (QSKK…EDII), 197–211 (QSKK…EDII), 212–226 (QSKK…EDII), 227–241 (QPKK…EDSV), 242–256 (PSKK…EDSV), 257–271 (QPKK…EDSV), 272–286 (QSKE…KDSI), 287–301 (QSKE…QDSI), 302–316 (QSKE…KDSV), 317–331 (QSKE…HESI), 332–346 (QSKE…KDSI), 347–362 (PSKE…DTIQ), 363–375 (SQEE…EDTI), 376–390 (QSQE…EEDV), and 391–405 (QLSE…AEIE). The tract at residues 92–405 (QLKQENISKS…KLLGLGAEIE (314 aa)) is 21 X 15 AA approximate tandem repeat of Q-P-K-X-G-D-I-P-K-S-[PS]-E-[KE]-X-I. Composition is skewed to basic and acidic residues over residues 137–293 (HYRE…ETKV) and 302–358 (QSKE…KSPE). Ser146 is modified (phosphoserine). Residues 375–384 (IQSQEGNTIK) show a composition bias toward polar residues. The region spanning 398-515 (LGLGAEIETL…KLERSISELK (118 aa)) is the Thioredoxin domain. Residues Cys442 and Cys445 are joined by a disulfide bond.

Testis-specific. Strongly expressed in the testicular seminiferous tubules, mostly in the round spermatids.

Its subcellular location is the cytoplasm. Probably plays a regulatory role in sperm development. May participate in regulation of fibrous sheath (FS) assembly by supporting the formation of disulfide bonds during sperm tail morphogenesis. May also be required to rectify incorrect disulfide pairing and generate suitable pairs between the FS constituents. Can reduce disulfide bonds in vitro in the presence of NADP and thioredoxin reductase. The sequence is that of Thioredoxin domain-containing protein 2 (Txndc2) from Mus musculus (Mouse).